Here is a 501-residue protein sequence, read N- to C-terminus: MFSNQYIQQRIHKANSLREEGKNPYKNGLKRSLTNAAFLEKYAYVKGLEEPKDKEKCESIVGRVKLLRLMGKACFIKIEDESAILQAYVSQNELNDEFKSLKKHLEVGDIVLVKGFPFATKTGELSVHALEFHILSKTIVPLPEKFHGLSDIELRYRQRYLDLIVNPSVKDVFKKRSLIVSSVRKFFETEGFLEVETPMMHPIPGGANARPFITYHNALEIERYLRIAPELYLKRLIVGGFEAVFEINRNFRNEGMDHSHNPEFTMIEFYWAYHTYEDLIELSKRLFDYLLKTLNLPSKIIYNDMEVDFNQTSVISYLDALETIGGISKDILEKEDRLLAYLLEQSIKVEPDLTYGKLLAEAFDHFVEHQLINPTFVTQYPIEISPLARRNDSNPNIADRFELFIAGKEIANGFSELNDPLDQLERFKNQVAEKEKGDEEAQYMDEDYVWALAHGMPPTAGQGIGIDRLVMLLTGAKSIKDVILFPAMRPVKNDFNVESEE.

Mg(2+) is bound by residues Glu402 and Glu409.

Belongs to the class-II aminoacyl-tRNA synthetase family. As to quaternary structure, homodimer. Mg(2+) is required as a cofactor.

It is found in the cytoplasm. It carries out the reaction tRNA(Lys) + L-lysine + ATP = L-lysyl-tRNA(Lys) + AMP + diphosphate. In Helicobacter pylori (strain Shi470), this protein is Lysine--tRNA ligase.